The following is a 509-amino-acid chain: Maturase K (509 aa).

The protein belongs to the intron maturase 2 family. MatK subfamily.

It is found in the plastid. Its subcellular location is the chloroplast. Usually encoded in the trnK tRNA gene intron. Probably assists in splicing its own and other chloroplast group II introns. The chain is Maturase K from Amentotaxus argotaenia (Chinese flowering yew).